A 98-amino-acid polypeptide reads, in one-letter code: Integration host factor subunit beta (98 aa).

It belongs to the bacterial histone-like protein family. Heterodimer of an alpha and a beta chain.

Its function is as follows. This protein is one of the two subunits of integration host factor, a specific DNA-binding protein that functions in genetic recombination as well as in transcriptional and translational control. This chain is Integration host factor subunit beta, found in Pseudomonas syringae pv. tomato (strain ATCC BAA-871 / DC3000).